We begin with the raw amino-acid sequence, 501 residues long: Lysine--tRNA ligase (501 aa).

Glu411 and Glu418 together coordinate Mg(2+).

It belongs to the class-II aminoacyl-tRNA synthetase family. As to quaternary structure, homodimer. Mg(2+) is required as a cofactor.

Its subcellular location is the cytoplasm. The catalysed reaction is tRNA(Lys) + L-lysine + ATP = L-lysyl-tRNA(Lys) + AMP + diphosphate. This is Lysine--tRNA ligase from Magnetococcus marinus (strain ATCC BAA-1437 / JCM 17883 / MC-1).